A 133-amino-acid polypeptide reads, in one-letter code: Nickel-responsive regulator (133 aa).

Ni(2+)-binding residues include H76, H87, H89, and C95.

Belongs to the transcriptional regulatory CopG/NikR family. Homotetramer. Requires Ni(2+) as cofactor.

In terms of biological role, transcriptional repressor of the nikABCDE operon. Is active in the presence of excessive concentrations of intracellular nickel. The sequence is that of Nickel-responsive regulator from Escherichia fergusonii (strain ATCC 35469 / DSM 13698 / CCUG 18766 / IAM 14443 / JCM 21226 / LMG 7866 / NBRC 102419 / NCTC 12128 / CDC 0568-73).